A 325-amino-acid polypeptide reads, in one-letter code: Elongation factor P--(R)-beta-lysine ligase (325 aa).

76 to 78 (SPE) serves as a coordination point for substrate. Residues 100–102 (RNE) and N109 each bind ATP. Residue Y118 coordinates substrate. 244-245 (EL) lines the ATP pocket. E251 contacts substrate. ATP is bound at residue G300.

This sequence belongs to the class-II aminoacyl-tRNA synthetase family. EpmA subfamily. As to quaternary structure, homodimer.

The catalysed reaction is D-beta-lysine + L-lysyl-[protein] + ATP = N(6)-((3R)-3,6-diaminohexanoyl)-L-lysyl-[protein] + AMP + diphosphate + H(+). With EpmB is involved in the beta-lysylation step of the post-translational modification of translation elongation factor P (EF-P) on 'Lys-34'. Catalyzes the ATP-dependent activation of (R)-beta-lysine produced by EpmB, forming a lysyl-adenylate, from which the beta-lysyl moiety is then transferred to the epsilon-amino group of EF-P 'Lys-34'. The polypeptide is Elongation factor P--(R)-beta-lysine ligase (Salmonella paratyphi A (strain ATCC 9150 / SARB42)).